A 1019-amino-acid chain; its full sequence is Photoactivated adenylate cyclase subunit alpha (1019 aa).

In terms of domain architecture, BLUF 1 spans 55–148; it reads LRRLMYLSAS…GRMYGEWHMK (94 aa). A Guanylate cyclase 1 domain is found at 204–332; the sequence is VVTFIYLVEF…DCINTASRIT (129 aa). The BLUF 2 domain maps to 467-559; it reads LITLTYISQA…RVYGSPLDMT (93 aa). Residues 615-744 form the Guanylate cyclase 2 domain; that stretch reads VMLATDICSF…EVSARVMEVE (130 aa). The interval 822–861 is disordered; it reads GTNAPGRGAPAGGIPSSPKVRPPGRTNSVSSYTPDPNEAL. The segment covering 825 to 839 has biased composition (low complexity); sequence APGRGAPAGGIPSSP. A compositionally biased stretch (polar residues) spans 846–855; that stretch reads RTNSVSSYTP.

It belongs to the adenylyl cyclase class-4/guanylyl cyclase family. In terms of assembly, heterotetramer of two alpha and two beta subunits. It depends on FAD as a cofactor.

The protein localises to the cell projection. It localises to the cilium. Its subcellular location is the flagellum. It catalyses the reaction ATP = 3',5'-cyclic AMP + diphosphate. With respect to regulation, activity increased by up to 80-fold under blue light. Its function is as follows. Acts as a blue light photoreceptor for the step-up photophobic response. Mediates photoavoidance. This chain is Photoactivated adenylate cyclase subunit alpha, found in Euglena gracilis.